Reading from the N-terminus, the 365-residue chain is Endophilin-B1 (365 aa).

The residue at position 1 (methionine 1) is an N-acetylmethionine. A membrane-binding amphipathic helix region spans residues 1-30 (MNIMDFNVKKLAADAGTFLSRAVQFTEEKL). The required for membrane binding stretch occupies residues 1–37 (MNIMDFNVKKLAADAGTFLSRAVQFTEEKLGQAEKTE). The BAR domain maps to 27-261 (EEKLGQAEKT…LGSFPSNYLS (235 aa)). Threonine 145 carries the post-translational modification Phosphothreonine; by CDK5. Residues 155–186 (YKTIAKERKLLQNKRLDLDAAKTRLKKAKAAE) adopt a coiled-coil conformation. In terms of domain architecture, SH3 spans 305-365 (SNNRKARVLY…VPITYLELLN (61 aa)).

Belongs to the endophilin family. Homodimer, and heterodimer with SH3GLB2. Binds BAX; induction of apoptosis augments BAX binding. Binds DNM1, HTT, AMPH, BIN1 and ARFGAP1. Interacts with UVRAG; UVRAG bridges the interaction to BECN1 indicative for an association with the PI3K complex II (PI3KC3-C2). Isoform 3 interacts with PPP1CC; this interaction leads to the inhibition of phosphatase activity. Post-translationally, phosphorylated at Thr-145 by CDK5; this phosphorylation is required for autophagy induction in starved neurons and facilitates homodimerization. In terms of tissue distribution, isoform 1 is widely expressed. Isoform 2 is brain-specific. Isoform 3 is predominantly expressed in testis, but it is also detected in liver and, at much lower levels, in skin, stomach and ovary.

Its subcellular location is the cytoplasm. It is found in the golgi apparatus membrane. It localises to the mitochondrion outer membrane. The protein localises to the cytoplasmic vesicle. The protein resides in the autophagosome membrane. Its subcellular location is the midbody. Functionally, may be required for normal outer mitochondrial membrane dynamics. Required for coatomer-mediated retrograde transport in certain cells. May recruit other proteins to membranes with high curvature. May promote membrane fusion. Involved in activation of caspase-dependent apoptosis by promoting BAX/BAK1 activation. Isoform 1 acts proapoptotic in fibroblasts. Involved in caspase-independent apoptosis during nutrition starvation and involved in the regulation of autophagy. Activates lipid kinase activity of PIK3C3 during autophagy probably by associating with the PI3K complex II (PI3KC3-C2). Associated with PI3KC3-C2 during autophagy may regulate the trafficking of ATG9A from the Golgi complex to the peripheral cytoplasm for the formation of autophagosomes by inducing Golgi membrane tubulation and fragmentation. Involved in regulation of degradative endocytic trafficking and cytokinesis, probably in the context of PI3KC3-C2. Isoform 2 acts antiapoptotic in neuronal cells; involved in maintenance of mitochondrial morphology and promotes neuronal viability. The polypeptide is Endophilin-B1 (Sh3glb1) (Mus musculus (Mouse)).